A 69-amino-acid polypeptide reads, in one-letter code: Protein transport protein Sec61 subunit gamma-3 (69 aa).

Methionine 1 carries the post-translational modification N-acetylmethionine. Over 1-32 the chain is Cytoplasmic; sequence MEAIDSAIDPLRDFAKSSVRLVQRCHKPDRKE. A helical transmembrane segment spans residues 33–61; it reads FTKVAVRTAIGFVVMGFVGFFVKLVFIPI. The Extracellular segment spans residues 62 to 69; it reads NNIIVGSS.

Belongs to the SecE/SEC61-gamma family. Heterotrimeric complex composed of SEC61-alpha, SEC61-beta and SEC61-gamma.

It is found in the endoplasmic reticulum membrane. Functionally, necessary for protein translocation in the endoplasmic reticulum. In Arabidopsis thaliana (Mouse-ear cress), this protein is Protein transport protein Sec61 subunit gamma-3 (SEC61G3).